A 174-amino-acid chain; its full sequence is Tat proofreading chaperone TtrD (174 aa).

It belongs to the TorD/DmsD family. Monomer.

Its subcellular location is the cytoplasm. Its function is as follows. Binds specifically to the Tat signal peptide of the TtrA subunit of the tetrathionate reductase. The protein is Tat proofreading chaperone TtrD (ttrD) of Archaeoglobus fulgidus (strain ATCC 49558 / DSM 4304 / JCM 9628 / NBRC 100126 / VC-16).